The chain runs to 910 residues: Leucine--tRNA ligase (910 aa).

The 'HIGH' region motif lies at 50–60 (PYTNGSLHVGH). Residues 611 to 615 (KISKS) carry the 'KMSKS' region motif. Lysine 614 is an ATP binding site.

Belongs to the class-I aminoacyl-tRNA synthetase family.

It is found in the cytoplasm. The catalysed reaction is tRNA(Leu) + L-leucine + ATP = L-leucyl-tRNA(Leu) + AMP + diphosphate. The chain is Leucine--tRNA ligase from Thermoplasma acidophilum (strain ATCC 25905 / DSM 1728 / JCM 9062 / NBRC 15155 / AMRC-C165).